A 1266-amino-acid polypeptide reads, in one-letter code: Intermembrane phospholipid transporter YhdP (1266 aa).

The Cytoplasmic portion of the chain corresponds to 1-5; that stretch reads MRRLP. The chain crosses the membrane as a helical span at residues 6 to 26; it reads GILLLTGAALVVIAALLVSGL. Topologically, residues 27–1266 are periplasmic; sequence RIALPHLDAW…LRQPRKEKAQ (1240 aa). The P-helix stretch occupies residues 94-103; that stretch reads VWQSLLHMRW. Residues 1121 to 1144 are C-helix_2; that stretch reads HAGQLLRLLSVDALMRKLRFDFRD. The interval 1203 to 1237 is C-helix_1; sequence ISATVGVAAAFAVNPIVGAAVFAASKVLGPLWSKV.

It localises to the cell inner membrane. Involved in outer membrane lipid homeostasis. Likely transports phospholipids between the inner membrane and the outer membrane. It would provide a bridge-like structure that protects phospholipids as they travel across the periplasm. The phosphate-containing molecules are captured along the length of a hydrophobic groove that is continuous along all but the extreme N-terminus of the protein. It also appears to control, directly or indirectly, levels of cyclic enterobacterial common antigen (cyclic ECA), a soluble cyclic ECA molecule present in the periplasm. In terms of biological role, tamB, YdbH and YhdP are redundant, but not equivalent, in performing an essential function for growth and maintaining lipid homeostasis in the outer membrane. The transport functions of TamB and YhdP could be differentiated according to the fatty acid saturation state of the phospholipids, with TamB transporting more unsaturated phospholipids and YhdP more saturated phospholipids. Any of these three proteins is sufficient for growth. This chain is Intermembrane phospholipid transporter YhdP (yhdP), found in Escherichia coli (strain K12).